The primary structure comprises 1322 residues: Serine/threonine-protein phosphatase UIS2 (1322 aa).

The N-terminal stretch at 1–22 is a signal peptide; sequence MNISKFFLIFIPLVLFKYPANN. Residues 1–535 are interaction with phosphorylated eIF2alpha; it reads MNISKFFLIF…NELKSTSNAM (535 aa). Composition is skewed to basic and acidic residues over residues 267 to 279 and 288 to 326; these read EKSA…KELN and NSKK…KSEN. Disordered regions lie at residues 267–326, 613–646, 1066–1087, and 1170–1196; these read EKSA…KSEN, NTNT…SENN, NETP…IQPN, and EVPD…NKDD. The span at 631–646 shows a compositional bias: low complexity; that stretch reads NNYTDGNEGNNNSENN.

Mn(2+) serves as cofactor.

It catalyses the reaction O-phospho-L-seryl-[protein] + H2O = L-seryl-[protein] + phosphate. Functionally, protein phosphatase which dephosphorylates 'Ser-59' of translation factor eIF2alpha during the liver stage, thus enabling protein translation. This is Serine/threonine-protein phosphatase UIS2 from Plasmodium berghei (strain Anka).